A 311-amino-acid polypeptide reads, in one-letter code: Aspartate carbamoyltransferase catalytic subunit (311 aa).

Residues arginine 55 and threonine 56 each contribute to the carbamoyl phosphate site. Residue lysine 85 participates in L-aspartate binding. 3 residues coordinate carbamoyl phosphate: arginine 106, histidine 135, and glutamine 138. The L-aspartate site is built by arginine 168 and arginine 230. 2 residues coordinate carbamoyl phosphate: leucine 268 and proline 269.

Belongs to the aspartate/ornithine carbamoyltransferase superfamily. ATCase family. In terms of assembly, heterododecamer (2C3:3R2) of six catalytic PyrB chains organized as two trimers (C3), and six regulatory PyrI chains organized as three dimers (R2).

The catalysed reaction is carbamoyl phosphate + L-aspartate = N-carbamoyl-L-aspartate + phosphate + H(+). Its pathway is pyrimidine metabolism; UMP biosynthesis via de novo pathway; (S)-dihydroorotate from bicarbonate: step 2/3. Its function is as follows. Catalyzes the condensation of carbamoyl phosphate and aspartate to form carbamoyl aspartate and inorganic phosphate, the committed step in the de novo pyrimidine nucleotide biosynthesis pathway. The protein is Aspartate carbamoyltransferase catalytic subunit of Serratia proteamaculans (strain 568).